Consider the following 356-residue polypeptide: Homoserine O-acetyltransferase (356 aa).

One can recognise an AB hydrolase-1 domain in the interval 49–337 (VLICHALTGS…KSTHGHDAFL (289 aa)). The active-site Nucleophile is the Ser-143. Arg-212 contributes to the substrate binding site. Active-site residues include Asp-304 and His-333. Asp-334 contributes to the substrate binding site.

This sequence belongs to the AB hydrolase superfamily. MetX family. Homodimer.

It is found in the cytoplasm. The enzyme catalyses L-homoserine + acetyl-CoA = O-acetyl-L-homoserine + CoA. The protein operates within amino-acid biosynthesis; L-methionine biosynthesis via de novo pathway; O-acetyl-L-homoserine from L-homoserine: step 1/1. Its function is as follows. Transfers an acetyl group from acetyl-CoA to L-homoserine, forming acetyl-L-homoserine. This is Homoserine O-acetyltransferase from Nostoc punctiforme (strain ATCC 29133 / PCC 73102).